We begin with the raw amino-acid sequence, 117 residues long: Large ribosomal subunit protein bL19 (117 aa).

This sequence belongs to the bacterial ribosomal protein bL19 family.

In terms of biological role, this protein is located at the 30S-50S ribosomal subunit interface and may play a role in the structure and function of the aminoacyl-tRNA binding site. This chain is Large ribosomal subunit protein bL19, found in Shewanella frigidimarina (strain NCIMB 400).